Reading from the N-terminus, the 353-residue chain is MSHILDTINTVYPFPPKPIPLRDEEKQAYIAEIKQLLIEKDAVLIAHYYTDPEIQALAESTGGFVGDSLEMAKFGNRYPATTLIIAGVRFMGESAKILTPEKRILMPTLEAECSLDLGCPADKFTEFCDAHPDHTVVVYANTSAAVKARADWVVTSSIALEIVEHLDSEGKPIIWGPDRHLGAYIAKKTGADMLLWQGECVVHDEFSADALRKMKALYPDAAILVHPESPASVVELADAVGSTSQLIKAAKTLPQQKMIVATDKGIFFKMQQMVPEKELIEAPTAGAGATCRSCAHCPWMAMNGLQAIAQALREGGKQHEIFVDEALRVKSLIPLNRMLDFAEQLNLKVKGNA.

Residues His47 and Ser68 each coordinate iminosuccinate. Cys113 contacts [4Fe-4S] cluster. Iminosuccinate contacts are provided by residues 139–141 (YAN) and Ser156. Cys200 serves as a coordination point for [4Fe-4S] cluster. Residues 226–228 (HPE) and Thr243 contribute to the iminosuccinate site. Cys297 serves as a coordination point for [4Fe-4S] cluster.

The protein belongs to the quinolinate synthase family. Type 1 subfamily. [4Fe-4S] cluster is required as a cofactor.

The protein localises to the cytoplasm. The catalysed reaction is iminosuccinate + dihydroxyacetone phosphate = quinolinate + phosphate + 2 H2O + H(+). The protein operates within cofactor biosynthesis; NAD(+) biosynthesis; quinolinate from iminoaspartate: step 1/1. Functionally, catalyzes the condensation of iminoaspartate with dihydroxyacetone phosphate to form quinolinate. In Vibrio cholerae serotype O1 (strain ATCC 39541 / Classical Ogawa 395 / O395), this protein is Quinolinate synthase.